Consider the following 304-residue polypeptide: Mas-related G-protein coupled receptor member A (304 aa).

Topologically, residues 1 to 17 (MDKTIPGSFNSRTLIPN) are extracellular. Residues 18–38 (LLIIISGLVGLIGNAMVFWLL) traverse the membrane as a helical segment. The Cytoplasmic segment spans residues 39-46 (GFRLARNA). A helical membrane pass occupies residues 47-67 (FSVYILNLALADFLFLLCHII). Residues 68–80 (DSTLLLLKFSYPN) are Extracellular-facing. The chain crosses the membrane as a helical span at residues 81-101 (IIFLPCFNTVMMVPYIAGLSM). Over 102 to 132 (LSAISTERCLSVVCPIWYRCRRPKHTSTVMC) the chain is Cytoplasmic. Residues 133–153 (SAIWVLSLLICILNRYFCGFL) traverse the membrane as a helical segment. Residues 154–167 (DTKYEKDNRCLASN) are Extracellular-facing. Residues 168-188 (FFTAACLIFLFVVLCLSSLAL) traverse the membrane as a helical segment. Topologically, residues 189–211 (LVRLFCGAGRMKLTRLYATIMLT) are cytoplasmic. Residues 212–232 (VLVFLLCGLPFGIHWFLLIWI) form a helical membrane-spanning segment. The Extracellular segment spans residues 233 to 244 (KIDYGKFAYGLY). A helical membrane pass occupies residues 245-265 (LAALVLTAVNSCANPIIYFFV). Topologically, residues 266-304 (GSFRHQKHQTLKMVLQRALQDTPETAENTVEMSSSKVEP) are cytoplasmic.

This sequence belongs to the G-protein coupled receptor 1 family. Mas subfamily. In terms of tissue distribution, expressed in a subset of IB4-positive small diameter nociceptive dorsal root neurons.

The protein localises to the cell membrane. In terms of biological role, orphan receptor activated by a subset of RFamide-family neuropeptides such as FLRF-amide and FMRF-amide. Mediates its action by association with G proteins that activate a phosphatidylinositol-calcium second messenger system. Its effect is mediated by G(q) and G(11) proteins. May regulate the function of nociceptive neurons by modulation of pain perception. The sequence is that of Mas-related G-protein coupled receptor member A (Mrgpra) from Rattus norvegicus (Rat).